Here is a 793-residue protein sequence, read N- to C-terminus: Wall-associated receptor kinase-like 18 (793 aa).

A signal peptide spans 1 to 28 (MSNESTNCSFFLNLFMLLLLLIFYSADA). Topologically, residues 29-378 (CQRECGGISI…YRCVRDKTKA (350 aa)) are extracellular. N-linked (GlcNAc...) asparagine glycosylation is found at asparagine 60, asparagine 130, asparagine 170, asparagine 238, asparagine 285, and asparagine 304. An atypical EGF-like region spans residues 312–371 (CTCGRITISETSYANCGCTYGYTGNPYVLNGCKDIDECKVKFEYCGKTETCVNFEGGYRC). Disulfide bonds link cysteine 314–cysteine 327, cysteine 349–cysteine 362, and cysteine 356–cysteine 371. A helical membrane pass occupies residues 379–399 (IMIGAGTGFGVLVLVGGLWWL). Residues 400–793 (RKFLIKRRIT…VEPLFPRLTW (394 aa)) are Cytoplasmic-facing. In terms of domain architecture, Protein kinase spans 453–728 (FSENRVLGHG…REVFTELERI (276 aa)). ATP is bound by residues 459 to 467 (LGHGGQGTV) and lysine 481. Position 526 is a phosphotyrosine (tyrosine 526). The active-site Proton acceptor is aspartate 579. A phosphothreonine mark is found at threonine 613 and threonine 618. Tyrosine 626 carries the phosphotyrosine modification. The interval 733–757 (EDSQVHNRIDEEEEEEEEEEEVVTT) is disordered. Residues 742–754 (DEEEEEEEEEEEV) show a composition bias toward acidic residues.

The protein belongs to the protein kinase superfamily. Ser/Thr protein kinase family.

Its subcellular location is the membrane. The enzyme catalyses L-seryl-[protein] + ATP = O-phospho-L-seryl-[protein] + ADP + H(+). The catalysed reaction is L-threonyl-[protein] + ATP = O-phospho-L-threonyl-[protein] + ADP + H(+). In terms of biological role, serine/threonine-protein kinase that may function as a signaling receptor of extracellular matrix component. The sequence is that of Wall-associated receptor kinase-like 18 (WAKL18) from Arabidopsis thaliana (Mouse-ear cress).